Consider the following 245-residue polypeptide: Chymotrypsin B (245 aa).

Cystine bridges form between Cys-1–Cys-121, Cys-42–Cys-58, Cys-135–Cys-201, Cys-167–Cys-182, and Cys-191–Cys-220. Residues 14–15 (AR) constitute a propeptide that is removed on maturation. In terms of domain architecture, Peptidase S1 spans 16–243 (IVNGEEAVPH…LRGWVDQILA (228 aa)). Residues His-57 and Asp-101 each act as charge relay system in the active site. The Charge relay system role is filled by Ser-195.

This sequence belongs to the peptidase S1 family.

It localises to the secreted. The protein resides in the extracellular space. The catalysed reaction is Preferential cleavage: Tyr-|-Xaa, Trp-|-Xaa, Phe-|-Xaa, Leu-|-Xaa.. The sequence is that of Chymotrypsin B from Gadus morhua (Atlantic cod).